We begin with the raw amino-acid sequence, 173 residues long: Alpha-crystallin A chain (173 aa).

Residue M1 is modified to N-acetylmethionine. Residues 1–63 are required for complex formation with BFSP1 and BFSP2; it reads MDITIQHPWF…RTVLESGISE (63 aa). Deamidated glutamine; partial is present on Q6. Phosphoserine is present on S45. Deamidated glutamine; partial is present on Q50. The sHSP domain occupies 52–164; it reads LFRTVLESGI…SDRSIPVSRE (113 aa). Residues K70 and K99 each carry the N6-acetyllysine modification. The Zn(2+) site is built by H100, E102, and H107. Residue S122 is modified to Phosphoserine. N123 is modified (deamidated asparagine; partial). The segment covering 146-167 has biased composition (basic and acidic residues); that stretch reads IHSDMDASHSDRSIPVSREEKP. Positions 146–173 are disordered; the sequence is IHSDMDASHSDRSIPVSREEKPTLAPSS. H154 is a Zn(2+) binding site. S162 carries O-linked (GlcNAc) serine glycosylation.

It belongs to the small heat shock protein (HSP20) family. Heteromer composed of three CRYAA and one CRYAB subunits. Inter-subunit bridging via zinc ions enhances stability, which is crucial as there is no protein turn over in the lens. Can also form homodimers and homotetramers (dimers of dimers) which serve as the building blocks of homooligomers. Within homooligomers, the zinc-binding motif is created from residues of 3 different molecules. His-100 and Glu-102 from one molecule are ligands of the zinc ion, and His-107 and His-154 residues from additional molecules complete the site with tetrahedral coordination geometry. Part of a complex required for lens intermediate filament formation composed of BFSP1, BFSP2 and CRYAA. In terms of processing, acetylation at Lys-70 may increase chaperone activity. Undergoes age-dependent proteolytical cleavage at the C-terminus.

It localises to the cytoplasm. Its subcellular location is the nucleus. Contributes to the transparency and refractive index of the lens. Acts as a chaperone, preventing aggregation of various proteins under a wide range of stress conditions. Required for the correct formation of lens intermediate filaments as part of a complex composed of BFSP1, BFSP2 and CRYAA. The chain is Alpha-crystallin A chain (CRYAA) from Osphranter rufus (Red kangaroo).